A 196-amino-acid polypeptide reads, in one-letter code: Autophagy-related protein 31 (196 aa).

Residues Ile-20–Asp-45 are disordered. Residues Asn-22–Gly-43 show a composition bias toward polar residues. 2 positions are modified to phosphoserine: Ser-38 and Ser-40. Thr-41 carries the phosphothreonine modification. A phosphoserine mark is found at Ser-44 and Ser-116. Positions Glu-120–Ser-129 are enriched in polar residues. The segment at Glu-120–Asp-145 is disordered. A phosphoserine mark is found at Ser-135, Ser-143, Ser-146, Ser-153, Ser-174, and Ser-195. Acidic residues predominate over residues Ser-135–Val-144.

In terms of assembly, forms a stable complex with ATG17 and ATG29. Interacts directly with ATG29. The ATG17-ATG29-ATG31 complex interacts with the ATG1-ATG13 complex. Note=The interaction with the ATG1-ATG13 complex is induced by starvation. In terms of processing, highly phosphorylated. Ser-174 is phosphorylated constitutively. Phosphorylation at Ser-174 is required for autophagy induced by various autophagy stimuli such as nitrogen starvation and rapamycin treatment.

Its subcellular location is the cytoplasm. It is found in the cytoskeleton. It localises to the preautophagosomal structure. Plays a role in starvation-induced autophagy. Involved in mitophagy. Functions with ATG17 and ATG29 at the preautophagosomal structure (PAS) in order to form normal autophagosomes under starvation conditions. May be involved in microtubule function, such as chromosome segregation and karyogamy. The protein is Autophagy-related protein 31 (ATG31) of Saccharomyces cerevisiae (strain ATCC 204508 / S288c) (Baker's yeast).